An 80-amino-acid polypeptide reads, in one-letter code: Large ribosomal subunit protein uL24 (80 aa).

Residues 53 to 80 (HMKPTQSHPQGSIIEREFPIHASNVKKS) form a disordered region.

This sequence belongs to the universal ribosomal protein uL24 family. Part of the 50S ribosomal subunit.

One of two assembly initiator proteins, it binds directly to the 5'-end of the 23S rRNA, where it nucleates assembly of the 50S subunit. In terms of biological role, one of the proteins that surrounds the polypeptide exit tunnel on the outside of the subunit. In Chlorobium limicola (strain DSM 245 / NBRC 103803 / 6330), this protein is Large ribosomal subunit protein uL24.